Reading from the N-terminus, the 615-residue chain is ATP-dependent zinc metalloprotease FtsH (615 aa).

The Cytoplasmic segment spans residues 1–8; sequence MAMNKDKP. The chain crosses the membrane as a helical span at residues 9-29; that stretch reads WTLYLLAVGLAVLAAVQFGLF. The Periplasmic segment spans residues 30–104; that stretch reads SQPAVQAIPY…FSGVVEDNTV (75 aa). Residues 105–125 form a helical membrane-spanning segment; the sequence is ATVMGALMPLLMLLALWYFLF. Over 126–615 the chain is Cytoplasmic; the sequence is HGLGQKQGLG…ATYVLVDATK (490 aa). An ATP-binding site is contributed by 198-205; it reads GPPGTGKT. His-420 contributes to the Zn(2+) binding site. Glu-421 is a catalytic residue. Residues His-424 and Asp-497 each coordinate Zn(2+).

In the central section; belongs to the AAA ATPase family. This sequence in the C-terminal section; belongs to the peptidase M41 family. Homohexamer. Zn(2+) is required as a cofactor.

Its subcellular location is the cell inner membrane. In terms of biological role, acts as a processive, ATP-dependent zinc metallopeptidase for both cytoplasmic and membrane proteins. Plays a role in the quality control of integral membrane proteins. In Pseudomonas putida (strain ATCC 700007 / DSM 6899 / JCM 31910 / BCRC 17059 / LMG 24140 / F1), this protein is ATP-dependent zinc metalloprotease FtsH.